Here is a 171-residue protein sequence, read N- to C-terminus: 3-hydroxydecanoyl-[acyl-carrier-protein] dehydratase (171 aa).

The active site involves His-70.

It belongs to the thioester dehydratase family. FabA subfamily. In terms of assembly, homodimer.

The protein localises to the cytoplasm. It carries out the reaction a (3R)-hydroxyacyl-[ACP] = a (2E)-enoyl-[ACP] + H2O. It catalyses the reaction (3R)-hydroxydecanoyl-[ACP] = (2E)-decenoyl-[ACP] + H2O. The enzyme catalyses (2E)-decenoyl-[ACP] = (3Z)-decenoyl-[ACP]. The protein operates within lipid metabolism; fatty acid biosynthesis. In terms of biological role, necessary for the introduction of cis unsaturation into fatty acids. Catalyzes the dehydration of (3R)-3-hydroxydecanoyl-ACP to E-(2)-decenoyl-ACP and then its isomerization to Z-(3)-decenoyl-ACP. Can catalyze the dehydratase reaction for beta-hydroxyacyl-ACPs with saturated chain lengths up to 16:0, being most active on intermediate chain length. The sequence is that of 3-hydroxydecanoyl-[acyl-carrier-protein] dehydratase from Shewanella denitrificans (strain OS217 / ATCC BAA-1090 / DSM 15013).